The following is a 439-amino-acid chain: MTKAPLHKSLYVQVLAAIVIGVVLGHFYPPSGEAMKPLGDGFIKLIKMIIAPVIFCTVVLGIAGMEDMKKVGKTGGLALLYFEIVSTLALIVGLVLVNVLQPGAGMNIDPRTIDTKAITAYTGPGKMTGTVEFLLNIIPVSMVDAFAKGDILQVLLISVLFGFALHRFGGRGTMVFDFIEKVSQVLFAIVGTIMKAAPIGAFGAMAFTIGKYGIGSLLSLGKLMGTFYLTCLFFIFAVLGTITRLHGFSVWKFVKYIKEELLIVLGTSSSESVLPRMLSKMENLGAKKTVVGLVIPTGYSFNLDGTAIYLTMAAVFIAQATNTPMTLMQEVTLLAVLLLTSKGAAGITGSGFIVLAASLSAVGHLPVAGLALILGIDRFMSEARALTNTIGNGVASIVVAKWSKELDEQRLHAQLNGQTAEEASAPQALPDRMESRIHH.

9 helical membrane-spanning segments follow: residues 10-30, 45-65, 77-97, 145-165, 185-205, 223-243, 290-310, 332-352, and 353-373; these read LYVQVLAAIVIGVVLGHFYPP, LIKMIIAPVIFCTVVLGIAGM, LALLYFEIVSTLALIVGLVLV, AFAKGDILQVLLISVLFGFAL, VLFAIVGTIMKAAPIGAFGAM, LMGTFYLTCLFFIFAVLGTIT, VVGLVIPTGYSFNLDGTAIYL, TLLAVLLLTSKGAAGITGSGF, and IVLAASLSAVGHLPVAGLALI. Positions 415 to 439 are disordered; that stretch reads LNGQTAEEASAPQALPDRMESRIHH.

The protein belongs to the dicarboxylate/amino acid:cation symporter (DAACS) (TC 2.A.23) family.

It localises to the cell inner membrane. In terms of biological role, responsible for the transport of dicarboxylates such as succinate, fumarate, and malate from the periplasm across the membrane. This is C4-dicarboxylate transport protein from Verminephrobacter eiseniae (strain EF01-2).